A 211-amino-acid polypeptide reads, in one-letter code: FMN-dependent NADH:quinone oxidoreductase 2 (211 aa).

17-19 contacts FMN; the sequence is SYS.

Belongs to the azoreductase type 1 family. As to quaternary structure, homodimer. Requires FMN as cofactor.

It carries out the reaction 2 a quinone + NADH + H(+) = 2 a 1,4-benzosemiquinone + NAD(+). The catalysed reaction is N,N-dimethyl-1,4-phenylenediamine + anthranilate + 2 NAD(+) = 2-(4-dimethylaminophenyl)diazenylbenzoate + 2 NADH + 2 H(+). Its activity is regulated as follows. Strongly inhibited by Pb(2+) and weakly inhibited by Cu(2+), Hg(2+) and Fe(2+). Stable in presence of Ag(+). In terms of biological role, quinone reductase that provides resistance to thiol-specific stress caused by electrophilic quinones. Contributes to resistance to 2-methylhydroquinone (2-MHQ) and catechol. Exhibits NADH-dependent 2,6-dichloroindophenol (DCIP) oxidoreductase activity. Functionally, also exhibits azoreductase activity. Catalyzes the reductive cleavage of the azo bond in aromatic azo compounds to the corresponding amines. Can reduce methyl red. The sequence is that of FMN-dependent NADH:quinone oxidoreductase 2 from Bacillus subtilis (strain 168).